Here is a 138-residue protein sequence, read N- to C-terminus: Large ribosomal subunit protein bL17 (138 aa).

This sequence belongs to the bacterial ribosomal protein bL17 family. As to quaternary structure, part of the 50S ribosomal subunit. Contacts protein L32.

The protein is Large ribosomal subunit protein bL17 of Solidesulfovibrio magneticus (strain ATCC 700980 / DSM 13731 / RS-1) (Desulfovibrio magneticus).